The following is a 329-amino-acid chain: Pantothenate kinase (329 aa).

Gly-107–Ser-114 lines the ATP pocket.

It belongs to the prokaryotic pantothenate kinase family.

The protein localises to the cytoplasm. It carries out the reaction (R)-pantothenate + ATP = (R)-4'-phosphopantothenate + ADP + H(+). It functions in the pathway cofactor biosynthesis; coenzyme A biosynthesis; CoA from (R)-pantothenate: step 1/5. This Streptomyces avermitilis (strain ATCC 31267 / DSM 46492 / JCM 5070 / NBRC 14893 / NCIMB 12804 / NRRL 8165 / MA-4680) protein is Pantothenate kinase.